We begin with the raw amino-acid sequence, 365 residues long: tRNA/tmRNA (uracil-C(5))-methyltransferase (365 aa).

Residues Gln189, Tyr217, Asn222, Glu238, and Asp298 each coordinate S-adenosyl-L-methionine. Catalysis depends on Cys323, which acts as the Nucleophile. Glu357 (proton acceptor) is an active-site residue.

Belongs to the class I-like SAM-binding methyltransferase superfamily. RNA M5U methyltransferase family. TrmA subfamily.

It catalyses the reaction uridine(54) in tRNA + S-adenosyl-L-methionine = 5-methyluridine(54) in tRNA + S-adenosyl-L-homocysteine + H(+). It carries out the reaction uridine(341) in tmRNA + S-adenosyl-L-methionine = 5-methyluridine(341) in tmRNA + S-adenosyl-L-homocysteine + H(+). In terms of biological role, dual-specificity methyltransferase that catalyzes the formation of 5-methyluridine at position 54 (m5U54) in all tRNAs, and that of position 341 (m5U341) in tmRNA (transfer-mRNA). In Shewanella frigidimarina (strain NCIMB 400), this protein is tRNA/tmRNA (uracil-C(5))-methyltransferase.